The sequence spans 317 residues: Flavin-dependent thymidylate synthase (317 aa).

S46 serves as a coordination point for FAD. Residues 55 to 166 (FEWKKEKWIE…ELETDMDFYT (112 aa)) form an insert region. Positions 100–317 (AVKERIKEAF…YRGTDKKNVI (218 aa)) constitute a ThyX domain. DUMP-binding positions include 178–181 (QWMR), 189–193 (EVSKR), and R259. FAD-binding positions include 181–183 (RHR) and E189. The ThyX motif motif lies at 181–191 (RHRFGSYNEVS). N281 contacts FAD. R286 contacts dUMP. R286 acts as the Involved in ionization of N3 of dUMP, leading to its activation in catalysis.

The protein belongs to the thymidylate synthase ThyX family. Homotetramer. FAD serves as cofactor.

The enzyme catalyses dUMP + (6R)-5,10-methylene-5,6,7,8-tetrahydrofolate + NADPH + H(+) = dTMP + (6S)-5,6,7,8-tetrahydrofolate + NADP(+). Its pathway is pyrimidine metabolism; dTTP biosynthesis. Functionally, catalyzes the reductive methylation of 2'-deoxyuridine-5'-monophosphate (dUMP) to 2'-deoxythymidine-5'-monophosphate (dTMP) while utilizing 5,10-methylenetetrahydrofolate (mTHF) as the methyl donor, and NADPH and FADH(2) as the reductant. The polypeptide is Flavin-dependent thymidylate synthase (Aquifex aeolicus (strain VF5)).